Reading from the N-terminus, the 298-residue chain is Acetaldehyde dehydrogenase (298 aa).

An NAD(+)-binding site is contributed by 6–9 (SGNI). Cysteine 121 serves as the catalytic Acyl-thioester intermediate. NAD(+) contacts are provided by residues 152 to 160 (SAGPGTRAN) and asparagine 271.

The protein belongs to the acetaldehyde dehydrogenase family.

The enzyme catalyses acetaldehyde + NAD(+) + CoA = acetyl-CoA + NADH + H(+). The polypeptide is Acetaldehyde dehydrogenase (Mycobacterium avium (strain 104)).